Consider the following 215-residue polypeptide: Proteasome subunit beta type-1 (215 aa).

N-acetylmethionine is present on M1. Residues 1–19 constitute a propeptide, removed in mature form; sequence MNGIQVDINRLKKGEVSLG. T20 functions as the Nucleophile in the catalytic mechanism.

Belongs to the peptidase T1B family. The 26S proteasome consists of a 20S proteasome core and two 19S regulatory subunits. The 20S proteasome core is composed of 28 subunits that are arranged in four stacked rings, resulting in a barrel-shaped structure. The two end rings are each formed by seven alpha subunits, and the two central rings are each formed by seven beta subunits. The catalytic chamber with the active sites is on the inside of the barrel.

Its subcellular location is the cytoplasm. The protein localises to the nucleus. The catalysed reaction is Cleavage of peptide bonds with very broad specificity.. In terms of biological role, the proteasome degrades poly-ubiquitinated proteins in the cytoplasm and in the nucleus. It is essential for the regulated turnover of proteins and for the removal of misfolded proteins. The proteasome is a multicatalytic proteinase complex that is characterized by its ability to cleave peptides with Arg, Phe, Tyr, Leu, and Glu adjacent to the leaving group at neutral or slightly basic pH. It has an ATP-dependent proteolytic activity. PRE3 and PRE4 are necessary for the peptidyl-glutamyl-peptide-hydrolyzing activity. This subunit is necessary for the peptidylglutamyl-peptide hydrolyzing activity. The sequence is that of Proteasome subunit beta type-1 (PRE3) from Saccharomyces cerevisiae (strain ATCC 204508 / S288c) (Baker's yeast).